A 121-amino-acid chain; its full sequence is Large ribosomal subunit protein bL12 (121 aa).

The protein belongs to the bacterial ribosomal protein bL12 family. In terms of assembly, homodimer. Part of the ribosomal stalk of the 50S ribosomal subunit. Forms a multimeric L10(L12)X complex, where L10 forms an elongated spine to which 2 to 4 L12 dimers bind in a sequential fashion. Binds GTP-bound translation factors.

Its function is as follows. Forms part of the ribosomal stalk which helps the ribosome interact with GTP-bound translation factors. Is thus essential for accurate translation. The protein is Large ribosomal subunit protein bL12 of Aliivibrio salmonicida (strain LFI1238) (Vibrio salmonicida (strain LFI1238)).